Reading from the N-terminus, the 71-residue chain is Keratin-associated protein 6-1 (71 aa).

It belongs to the KRTAP type 6 family. Interacts with hair keratins.

Functionally, in the hair cortex, hair keratin intermediate filaments are embedded in an interfilamentous matrix, consisting of hair keratin-associated proteins (KRTAP), which are essential for the formation of a rigid and resistant hair shaft through their extensive disulfide bond cross-linking with abundant cysteine residues of hair keratins. The matrix proteins include the high-sulfur and high-glycine-tyrosine keratins. In Homo sapiens (Human), this protein is Keratin-associated protein 6-1 (KRTAP6-1).